Reading from the N-terminus, the 141-residue chain is UPF0102 protein BRADO0179 (141 aa).

The tract at residues 1–24 (MAETDRATDKPAGAPKPAKTASPE) is disordered. A compositionally biased stretch (low complexity) spans 10 to 19 (KPAGAPKPAK).

Belongs to the UPF0102 family.

The chain is UPF0102 protein BRADO0179 from Bradyrhizobium sp. (strain ORS 278).